The following is a 929-amino-acid chain: MARKGKVNTLPQPQGKHQRKGKKQLENKILHSYEEESAGFDSEELEDNDEQGYSFGVNSEDDEEIDSDEAFDEEDEKRFADWSFNASKSGKSNKDHKNLNNTKEISLNEEDDSDDSVNSDKLENEGSVGSSIDENELVDLDTLLDNDQPEKNESNTASTIRPPWIGNNDHATDKENLLESDASSSNDSESELTDSADNMNESDSESEIESSDSDHDDGENSDSKLDNLRNYIVSLNQKRKKDEADAESVLSSDDNDSIEEISIKKVKYDPHETNKESEYNLIGSSEKTIDITDLLDSIPMNEQLKVSLKPLVSESSSISSKKLDAPLAKSIQDRLERQAAYEQTKNDLEKWKPIVADNRKSDQLIFPMNETARPVPSNNGLASSFEPRTESERKMHQALLDAGLENESALKKQEELALNKLSVEEVAERTRQLRFMRELMFREERKAKRVAKIKSKTYRKIRKNRKEKEMALIPKSEEDLENERIKSEEARALERMTQRHKNTSSWTRKMLERASHGEGTREAVNEQIRKGDELMQRIHGKEISEMDGEDVSEFSDSDYDTNEQVSTAFEKIRNEEEPKLKGVLGMKFMRDASNRQKALVQDEMQAFEDELAGVPNEDDTSQKGEDGVPGVLIGNNTGRRSFKPSEEAAKLSLPSRKNPFVSDSAVLKVNKPEMKEGQKKAEARKKKESPLEATEETNPWLQVPDQRTSSAKKLDKNSSKADKKNHKLKMDKVASLQELVEEPKVQPDLIFEEKAFESASEAESDVDVSVPMLKPTKGRLSIKQRELVAKAFAGDDVVAEFEKDKEDWVQEDAPKEEDHSLPGWGSWGGVGVKQRKTKPKVKKIAGLDPSKRKDSKLKHVIINEKRNKKAAKLTADSVPFPFESREQYERSLNLPMGPEWTTRASHHKAVAPRVVTKRGKVINPIKAPN.

Positions 1–257 (MARKGKVNTL…SVLSSDDNDS (257 aa)) are disordered. Residues 23 to 34 (KQLENKILHSYE) are compositionally biased toward basic and acidic residues. 5 stretches are compositionally biased toward acidic residues: residues 35–50 (EESA…DNDE), 59–75 (SEDD…DEED), 107–117 (LNEEDDSDDSV), 133–144 (DENELVDLDTLL), and 188–220 (SESE…DGEN). Ser251, Ser555, and Ser557 each carry phosphoserine. Residues 602 to 729 (DEMQAFEDEL…KADKKNHKLK (128 aa)) form a disordered region. Positions 605 to 619 (QAFEDELAGVPNEDD) are enriched in acidic residues. Positions 670-681 (NKPEMKEGQKKA) are enriched in basic and acidic residues. Polar residues predominate over residues 696-711 (ETNPWLQVPDQRTSSA). Over residues 712-729 (KKLDKNSSKADKKNHKLK) the composition is skewed to basic and acidic residues. Phosphoserine is present on residues Ser758, Ser760, and Ser764. Basic and acidic residues predominate over residues 805–820 (KEDWVQEDAPKEEDHS). The segment at 805–843 (KEDWVQEDAPKEEDHSLPGWGSWGGVGVKQRKTKPKVKK) is disordered. A compositionally biased stretch (basic residues) spans 833-843 (KQRKTKPKVKK).

It to yeast YML093w.

The protein localises to the nucleus. It localises to the nucleolus. This is an uncharacterized protein from Schizosaccharomyces pombe (strain 972 / ATCC 24843) (Fission yeast).